The following is a 254-amino-acid chain: UDP-2,3-diacylglucosamine hydrolase (254 aa).

Residues Asp-8, His-10, Asp-41, Asn-79, and His-114 each contribute to the Mn(2+) site. Substrate is bound at residue 79–80 (NR). Asp-122, Ser-160, Asn-164, Lys-167, and His-195 together coordinate substrate. His-195 and His-197 together coordinate Mn(2+).

It belongs to the LpxH family. The cofactor is Mn(2+).

It localises to the cell inner membrane. The enzyme catalyses UDP-2-N,3-O-bis[(3R)-3-hydroxytetradecanoyl]-alpha-D-glucosamine + H2O = 2-N,3-O-bis[(3R)-3-hydroxytetradecanoyl]-alpha-D-glucosaminyl 1-phosphate + UMP + 2 H(+). It participates in glycolipid biosynthesis; lipid IV(A) biosynthesis; lipid IV(A) from (3R)-3-hydroxytetradecanoyl-[acyl-carrier-protein] and UDP-N-acetyl-alpha-D-glucosamine: step 4/6. In terms of biological role, hydrolyzes the pyrophosphate bond of UDP-2,3-diacylglucosamine to yield 2,3-diacylglucosamine 1-phosphate (lipid X) and UMP by catalyzing the attack of water at the alpha-P atom. Involved in the biosynthesis of lipid A, a phosphorylated glycolipid that anchors the lipopolysaccharide to the outer membrane of the cell. The chain is UDP-2,3-diacylglucosamine hydrolase from Aeromonas salmonicida (strain A449).